The primary structure comprises 447 residues: Argininosuccinate synthase (447 aa).

ATP-binding positions include 20–28 (AFSGGLDTS) and Ala-46. Tyr-102 contributes to the L-citrulline binding site. ATP is bound by residues Gly-132 and Thr-134. 3 residues coordinate L-aspartate: Thr-134, Asn-138, and Asp-139. Residue Asn-138 coordinates L-citrulline. Residue Asp-139 coordinates ATP. Arg-142 and Ser-195 together coordinate L-citrulline. An ATP-binding site is contributed by Asp-197. Residues Thr-204, Glu-206, and Glu-283 each coordinate L-citrulline.

Belongs to the argininosuccinate synthase family. Type 2 subfamily. Homotetramer.

It is found in the cytoplasm. It carries out the reaction L-citrulline + L-aspartate + ATP = 2-(N(omega)-L-arginino)succinate + AMP + diphosphate + H(+). The protein operates within amino-acid biosynthesis; L-arginine biosynthesis; L-arginine from L-ornithine and carbamoyl phosphate: step 2/3. In Neisseria meningitidis serogroup C / serotype 2a (strain ATCC 700532 / DSM 15464 / FAM18), this protein is Argininosuccinate synthase.